Here is a 269-residue protein sequence, read N- to C-terminus: Glutamate racemase (269 aa).

Substrate-binding positions include 7-8 (DS) and 39-40 (YG). The active-site Proton donor/acceptor is the cysteine 70. 71-72 (NT) lines the substrate pocket. Cysteine 194 functions as the Proton donor/acceptor in the catalytic mechanism. Substrate is bound at residue 195-196 (TH).

This sequence belongs to the aspartate/glutamate racemases family.

The enzyme catalyses L-glutamate = D-glutamate. Its pathway is cell wall biogenesis; peptidoglycan biosynthesis. Its function is as follows. Provides the (R)-glutamate required for cell wall biosynthesis. The chain is Glutamate racemase from Roseobacter denitrificans (strain ATCC 33942 / OCh 114) (Erythrobacter sp. (strain OCh 114)).